Consider the following 142-residue polypeptide: HTH-type transcriptional regulator MntR (142 aa).

Positions 1 to 63 constitute an HTH dtxR-type domain; the sequence is MPTPSMEDYI…YEKYRGLVLT (63 aa). The Mn(2+) site is built by Asp-8, Glu-11, His-77, Glu-99, Glu-102, and His-103.

It belongs to the DtxR/MntR family. In terms of assembly, homodimer.

The protein localises to the cytoplasm. DNA binding is strongly activated by Mn(2+). Its function is as follows. Central regulator of manganese homeostasis. This Bacillus cereus (strain AH820) protein is HTH-type transcriptional regulator MntR.